The sequence spans 103 residues: Small ribosomal subunit protein uS10 (103 aa).

The protein belongs to the universal ribosomal protein uS10 family. In terms of assembly, part of the 30S ribosomal subunit.

Functionally, involved in the binding of tRNA to the ribosomes. The sequence is that of Small ribosomal subunit protein uS10 from Xylella fastidiosa (strain M12).